The primary structure comprises 287 residues: Glycine--tRNA ligase alpha subunit (287 aa).

It belongs to the class-II aminoacyl-tRNA synthetase family. As to quaternary structure, tetramer of two alpha and two beta subunits.

The protein resides in the cytoplasm. The catalysed reaction is tRNA(Gly) + glycine + ATP = glycyl-tRNA(Gly) + AMP + diphosphate. The sequence is that of Glycine--tRNA ligase alpha subunit from Campylobacter jejuni subsp. jejuni serotype O:6 (strain 81116 / NCTC 11828).